We begin with the raw amino-acid sequence, 34 residues long: Leader peptide SpeFL (34 aa).

The segment at 1 to 13 (MENNSRTMPHIRR) is sensor domain. An Ornithine recognition loop motif is present at residues 10–16 (HIRRTTH). Arg-13 serves as a coordination point for L-ornithine. The tract at residues 14 to 34 (TTHIMKFAHRNSFDFHFFNAR) is effector domain.

The protein belongs to the speF operon leader peptide family. In terms of assembly, binds ornithine in stalled 70S ribosomes, blocking the upper two-thirds of the exit tunnel. Contacts 23S rRNA and ribosomal proteins L4 and L22.

In terms of biological role, a small protein (arrest peptide) encoded upstream of inducible ornithine carboxylase gene (speF) that controls expression of downstream genes (speF and patE) by nascent chain-translational arrest and transcriptional attenuation. In the presence of ornithine a toeprint due to ribosomal arrest can be seen on the speFL transcript. Only L-ornithine (not other tested amino acids) has this effect. It is thought that in the presence of ornithine, ribosomal stalling on speFL prevents binding of Rho transcription termination factor to a downstream rut site allowing transcription of the operon. In the absence of ornithine, ribosomes terminate translation and are recycled, exposing the rut site allowing Rho to bind and prematurely terminate transcription. The presence of a pair of rare Arg codons could slow down translation to prevent polysome accumulation and to expose the rut site to Rho. This is Leader peptide SpeFL from Escherichia coli (strain K12).